The chain runs to 143 residues: D-aminoacyl-tRNA deacylase (143 aa).

A Gly-cisPro motif, important for rejection of L-amino acids motif is present at residues 135–136 (GP).

It belongs to the DTD family. In terms of assembly, homodimer.

The protein resides in the cytoplasm. It catalyses the reaction glycyl-tRNA(Ala) + H2O = tRNA(Ala) + glycine + H(+). The enzyme catalyses a D-aminoacyl-tRNA + H2O = a tRNA + a D-alpha-amino acid + H(+). In terms of biological role, an aminoacyl-tRNA editing enzyme that deacylates mischarged D-aminoacyl-tRNAs. Also deacylates mischarged glycyl-tRNA(Ala), protecting cells against glycine mischarging by AlaRS. Acts via tRNA-based rather than protein-based catalysis; rejects L-amino acids rather than detecting D-amino acids in the active site. By recycling D-aminoacyl-tRNA to D-amino acids and free tRNA molecules, this enzyme counteracts the toxicity associated with the formation of D-aminoacyl-tRNA entities in vivo and helps enforce protein L-homochirality. This Mycobacterium avium (strain 104) protein is D-aminoacyl-tRNA deacylase.